Reading from the N-terminus, the 314-residue chain is Formimidoylglutamase (314 aa).

Mn(2+) is bound by residues H127, D151, H153, D155, D239, and D241.

It belongs to the arginase family. Mn(2+) serves as cofactor.

It catalyses the reaction N-formimidoyl-L-glutamate + H2O = formamide + L-glutamate. It participates in amino-acid degradation; L-histidine degradation into L-glutamate; L-glutamate from N-formimidoyl-L-glutamate (hydrolase route): step 1/1. Its function is as follows. Catalyzes the conversion of N-formimidoyl-L-glutamate to L-glutamate and formamide. The sequence is that of Formimidoylglutamase from Corynebacterium efficiens (strain DSM 44549 / YS-314 / AJ 12310 / JCM 11189 / NBRC 100395).